Reading from the N-terminus, the 686-residue chain is tRNA 5-methylaminomethyl-2-thiouridine biosynthesis bifunctional protein MnmC (686 aa).

Residues M1–D258 are tRNA (mnm(5)s(2)U34)-methyltransferase. Residues I276–L686 are FAD-dependent cmnm(5)s(2)U34 oxidoreductase.

The protein in the N-terminal section; belongs to the methyltransferase superfamily. tRNA (mnm(5)s(2)U34)-methyltransferase family. In the C-terminal section; belongs to the DAO family. FAD is required as a cofactor.

The protein resides in the cytoplasm. It catalyses the reaction 5-aminomethyl-2-thiouridine(34) in tRNA + S-adenosyl-L-methionine = 5-methylaminomethyl-2-thiouridine(34) in tRNA + S-adenosyl-L-homocysteine + H(+). Functionally, catalyzes the last two steps in the biosynthesis of 5-methylaminomethyl-2-thiouridine (mnm(5)s(2)U) at the wobble position (U34) in tRNA. Catalyzes the FAD-dependent demodification of cmnm(5)s(2)U34 to nm(5)s(2)U34, followed by the transfer of a methyl group from S-adenosyl-L-methionine to nm(5)s(2)U34, to form mnm(5)s(2)U34. In Shewanella loihica (strain ATCC BAA-1088 / PV-4), this protein is tRNA 5-methylaminomethyl-2-thiouridine biosynthesis bifunctional protein MnmC.